The primary structure comprises 450 residues: Probable glycylpeptide N-tetradecanoyltransferase (450 aa).

The tract at residues 1–28 (MSHGHSHDGAPCGGHHGDDGAGGSRPSV) is disordered. Tetradecanoyl-CoA-binding residues include Q67, F68, W69, F200, L201, C202, V203, S209, R211, V212, and A213.

The protein belongs to the NMT family.

Its subcellular location is the cytoplasm. The enzyme catalyses N-terminal glycyl-[protein] + tetradecanoyl-CoA = N-tetradecanoylglycyl-[protein] + CoA + H(+). Its function is as follows. Adds a myristoyl group to the N-terminal glycine residue of certain cellular proteins. This chain is Probable glycylpeptide N-tetradecanoyltransferase (nmt-1), found in Caenorhabditis elegans.